The primary structure comprises 176 residues: RNA pyrophosphohydrolase (176 aa).

The Nudix hydrolase domain maps to 6–149 (GYRPNVGIVI…KRDVYRRVMK (144 aa)). The Nudix box signature appears at 38–59 (GGINPGESPEQAMYRELYEEVG).

It belongs to the Nudix hydrolase family. RppH subfamily. Requires a divalent metal cation as cofactor.

In terms of biological role, accelerates the degradation of transcripts by removing pyrophosphate from the 5'-end of triphosphorylated RNA, leading to a more labile monophosphorylated state that can stimulate subsequent ribonuclease cleavage. The polypeptide is RNA pyrophosphohydrolase (Photorhabdus laumondii subsp. laumondii (strain DSM 15139 / CIP 105565 / TT01) (Photorhabdus luminescens subsp. laumondii)).